The chain runs to 206 residues: Urease accessory protein UreG (206 aa).

13–20 (GPVGSGKT) is a binding site for GTP.

It belongs to the SIMIBI class G3E GTPase family. UreG subfamily. In terms of assembly, homodimer. UreD, UreF and UreG form a complex that acts as a GTP-hydrolysis-dependent molecular chaperone, activating the urease apoprotein by helping to assemble the nickel containing metallocenter of UreC. The UreE protein probably delivers the nickel.

It localises to the cytoplasm. Functionally, facilitates the functional incorporation of the urease nickel metallocenter. This process requires GTP hydrolysis, probably effectuated by UreG. This is Urease accessory protein UreG from Natronomonas pharaonis (strain ATCC 35678 / DSM 2160 / CIP 103997 / JCM 8858 / NBRC 14720 / NCIMB 2260 / Gabara) (Halobacterium pharaonis).